The following is a 443-amino-acid chain: Methyl-coenzyme M reductase I subunit beta (443 aa).

Residue Tyr-367 coordinates coenzyme M. Gly-369 contacts coenzyme B.

This sequence belongs to the methyl-coenzyme M reductase beta subunit family. MCR is a hexamer of two alpha, two beta, and two gamma chains, forming a dimer of heterotrimers. Coenzyme F430 is required as a cofactor.

It is found in the cytoplasm. It carries out the reaction coenzyme B + methyl-coenzyme M = methane + coenzyme M-coenzyme B heterodisulfide. It functions in the pathway one-carbon metabolism; methyl-coenzyme M reduction; methane from methyl-coenzyme M: step 1/1. Methyl-coenzyme M reductase activity is inhibited by 3-nitrooxypropanol (3-NOP) in vitro and in vivo, by oxidation of its active site Ni(I), which stops both growth and methanogenesis. Is also inhibited by the reaction product CoM-S-S-CoB. Functionally, component of the methyl-coenzyme M reductase (MCR) I that catalyzes the reductive cleavage of methyl-coenzyme M (CoM-S-CH3 or 2-(methylthio)ethanesulfonate) using coenzyme B (CoB or 7-mercaptoheptanoylthreonine phosphate) as reductant which results in the production of methane and the mixed heterodisulfide of CoB and CoM (CoM-S-S-CoB). This is the final step in methanogenesis. Neither N-6-mercaptohexanoylthreonine phosphate (H-S-HxoTP) nor N-8-mercaptooctanoylthreonine phosphate (H-SOcoTP) nor any other thiol compound such as CoA or CoM can substitute for CoB as the electron donor. This is Methyl-coenzyme M reductase I subunit beta (mcrB) from Methanothermobacter marburgensis (strain ATCC BAA-927 / DSM 2133 / JCM 14651 / NBRC 100331 / OCM 82 / Marburg) (Methanobacterium thermoautotrophicum).